Reading from the N-terminus, the 265-residue chain is 6-carboxyhexanoate--CoA ligase (265 aa).

The protein belongs to the BioW family. As to quaternary structure, homodimer. It depends on Mg(2+) as a cofactor.

The enzyme catalyses heptanedioate + ATP + CoA = 6-carboxyhexanoyl-CoA + AMP + diphosphate. The protein operates within metabolic intermediate metabolism; pimeloyl-CoA biosynthesis; pimeloyl-CoA from pimelate: step 1/1. Functionally, catalyzes the transformation of pimelate into pimeloyl-CoA with concomitant hydrolysis of ATP to AMP. The chain is 6-carboxyhexanoate--CoA ligase from Syntrophotalea carbinolica (strain DSM 2380 / NBRC 103641 / GraBd1) (Pelobacter carbinolicus).